The following is a 591-amino-acid chain: Metalloendopeptidase OPG085 (591 aa).

Residue histidine 41 participates in Zn(2+) binding. Glutamate 44 is an active-site residue. Zn(2+) is bound by residues histidine 45 and glutamate 112.

The protein belongs to the peptidase M44 family. Requires Zn(2+) as cofactor. In terms of processing, undergoes proteolytic processing during the course of infection. May be cleaved into 46 kDa and 22 kDa products (Potential).

Its subcellular location is the virion. Functionally, probably involved in maturation of some viral proteins by processing them preferentially at Ala-Gly-|-Ser/Thr/Lys motifs. Does not seem to be responsible for the cleavage of major core proteins. The chain is Metalloendopeptidase OPG085 (OPG085) from Homo sapiens (Human).